The sequence spans 465 residues: Hepatocyte nuclear factor 6 (465 aa).

2 disordered regions span residues 15 to 84 (GVSH…GPLH) and 119 to 141 (SDKFPHHHHHHHHHHHPHHHQRL). The span at 123 to 140 (PHHHHHHHHHHHPHHHQR) shows a compositional bias: basic residues. Residues 283–369 (GSNSGQMEEI…QRMSALRLAA (87 aa)) constitute a DNA-binding region (CUT). Residues 385-444 (PKKPRLVFTDVQRRTLHAIFKENKRPSKELQITISQQLGLELSTVSNFFMNARRRSLDKW) constitute a DNA-binding region (homeobox). The tract at residues 443–465 (KWQDEGGSNSGSSSSSSSTCTKA) is disordered. Over residues 448–465 (GGSNSGSSSSSSSTCTKA) the composition is skewed to low complexity.

The protein belongs to the CUT homeobox family. In terms of assembly, binds DNA as a monomer.

It is found in the nucleus. Functionally, transcriptional activator. Binds the consensus sequence 5'-DHWATTGAYTWWD-3' on a variety of gene promoters such as those of HNF3B and TTR. Important for liver genes transcription. Stimulates the expression of Onecut3 in the developing endoderm. This is Hepatocyte nuclear factor 6 (Onecut1) from Mus musculus (Mouse).